A 322-amino-acid polypeptide reads, in one-letter code: Ferrochelatase (322 aa).

2 residues coordinate Fe cation: H194 and E275.

The protein belongs to the ferrochelatase family.

The protein resides in the cytoplasm. The enzyme catalyses heme b + 2 H(+) = protoporphyrin IX + Fe(2+). Its pathway is porphyrin-containing compound metabolism; protoheme biosynthesis; protoheme from protoporphyrin-IX: step 1/1. In terms of biological role, catalyzes the ferrous insertion into protoporphyrin IX. In Yersinia enterocolitica serotype O:8 / biotype 1B (strain NCTC 13174 / 8081), this protein is Ferrochelatase.